The primary structure comprises 260 residues: Cytochrome c oxidase subunit 3 (260 aa).

The Mitochondrial matrix portion of the chain corresponds to 1–15; the sequence is MTHQTHAYHMVNPSP. The chain crosses the membrane as a helical span at residues 16–34; that stretch reads WPLTGALSALLMTSGLAMW. Residues 35–40 are Mitochondrial intermembrane-facing; the sequence is FHFNST. The chain crosses the membrane as a helical span at residues 41–66; it reads ALLMIGLTTNMLTMYQWWRDIIREST. The Mitochondrial matrix segment spans residues 67–72; that stretch reads FQGHHT. A helical membrane pass occupies residues 73–105; it reads PAVQKGLRYGMILFIISEVLFFTGFFWAFYHSS. Topologically, residues 106 to 128 are mitochondrial intermembrane; that stretch reads LAPTPELGGCWPPTGIHPLNPLE. A helical transmembrane segment spans residues 129-152; that stretch reads VPLLNTSVLLASGVSITWAHHSLM. At 153-155 the chain is on the mitochondrial matrix side; sequence EGD. Residues 156 to 183 form a helical membrane-spanning segment; the sequence is RNHMLQALFITITLGVYFTLLQASEYYE. At 184–190 the chain is on the mitochondrial intermembrane side; it reads APFTISD. A helical membrane pass occupies residues 191–223; that stretch reads GVYGSTFFVATGFHGLHVIIGSTFLIVCFFRQL. Residues 224-232 are Mitochondrial matrix-facing; the sequence is KFHFTSNHH. The helical transmembrane segment at 233–256 threads the bilayer; that stretch reads FGFEAAAWYWHFVDVVWLFLYVSI. At 257 to 260 the chain is on the mitochondrial intermembrane side; that stretch reads YWWG.

This sequence belongs to the cytochrome c oxidase subunit 3 family. As to quaternary structure, component of the cytochrome c oxidase (complex IV, CIV), a multisubunit enzyme composed of 14 subunits. The complex is composed of a catalytic core of 3 subunits MT-CO1, MT-CO2 and MT-CO3, encoded in the mitochondrial DNA, and 11 supernumerary subunits COX4I, COX5A, COX5B, COX6A, COX6B, COX6C, COX7A, COX7B, COX7C, COX8 and NDUFA4, which are encoded in the nuclear genome. The complex exists as a monomer or a dimer and forms supercomplexes (SCs) in the inner mitochondrial membrane with NADH-ubiquinone oxidoreductase (complex I, CI) and ubiquinol-cytochrome c oxidoreductase (cytochrome b-c1 complex, complex III, CIII), resulting in different assemblies (supercomplex SCI(1)III(2)IV(1) and megacomplex MCI(2)III(2)IV(2)).

It localises to the mitochondrion inner membrane. The catalysed reaction is 4 Fe(II)-[cytochrome c] + O2 + 8 H(+)(in) = 4 Fe(III)-[cytochrome c] + 2 H2O + 4 H(+)(out). In terms of biological role, component of the cytochrome c oxidase, the last enzyme in the mitochondrial electron transport chain which drives oxidative phosphorylation. The respiratory chain contains 3 multisubunit complexes succinate dehydrogenase (complex II, CII), ubiquinol-cytochrome c oxidoreductase (cytochrome b-c1 complex, complex III, CIII) and cytochrome c oxidase (complex IV, CIV), that cooperate to transfer electrons derived from NADH and succinate to molecular oxygen, creating an electrochemical gradient over the inner membrane that drives transmembrane transport and the ATP synthase. Cytochrome c oxidase is the component of the respiratory chain that catalyzes the reduction of oxygen to water. Electrons originating from reduced cytochrome c in the intermembrane space (IMS) are transferred via the dinuclear copper A center (CU(A)) of subunit 2 and heme A of subunit 1 to the active site in subunit 1, a binuclear center (BNC) formed by heme A3 and copper B (CU(B)). The BNC reduces molecular oxygen to 2 water molecules using 4 electrons from cytochrome c in the IMS and 4 protons from the mitochondrial matrix. This Bos mutus grunniens (Wild yak) protein is Cytochrome c oxidase subunit 3 (MT-CO3).